We begin with the raw amino-acid sequence, 434 residues long: UDP-N-acetylglucosamine 1-carboxyvinyltransferase (434 aa).

22-23 is a binding site for phosphoenolpyruvate; sequence KN. UDP-N-acetyl-alpha-D-glucosamine is bound at residue Arg-93. Residue Cys-117 is the Proton donor of the active site. Cys-117 bears the 2-(S-cysteinyl)pyruvic acid O-phosphothioketal mark. Positions 307 and 329 each coordinate UDP-N-acetyl-alpha-D-glucosamine.

This sequence belongs to the EPSP synthase family. MurA subfamily.

The protein localises to the cytoplasm. It carries out the reaction phosphoenolpyruvate + UDP-N-acetyl-alpha-D-glucosamine = UDP-N-acetyl-3-O-(1-carboxyvinyl)-alpha-D-glucosamine + phosphate. It participates in cell wall biogenesis; peptidoglycan biosynthesis. Cell wall formation. Adds enolpyruvyl to UDP-N-acetylglucosamine. The chain is UDP-N-acetylglucosamine 1-carboxyvinyltransferase from Coxiella burnetii (strain CbuG_Q212) (Coxiella burnetii (strain Q212)).